The following is a 433-amino-acid chain: Dihydroorotase (433 aa).

Zn(2+) is bound by residues histidine 63 and histidine 65. Substrate is bound by residues 65–67 (HLR) and asparagine 97. Aspartate 155, histidine 182, and histidine 235 together coordinate Zn(2+). Asparagine 283 serves as a coordination point for substrate. Aspartate 310 provides a ligand contact to Zn(2+). The active site involves aspartate 310. Histidine 314 is a substrate binding site.

This sequence belongs to the metallo-dependent hydrolases superfamily. DHOase family. Class I DHOase subfamily. The cofactor is Zn(2+).

The enzyme catalyses (S)-dihydroorotate + H2O = N-carbamoyl-L-aspartate + H(+). The protein operates within pyrimidine metabolism; UMP biosynthesis via de novo pathway; (S)-dihydroorotate from bicarbonate: step 3/3. In terms of biological role, catalyzes the reversible cyclization of carbamoyl aspartate to dihydroorotate. This is Dihydroorotase from Anaeromyxobacter dehalogenans (strain 2CP-C).